The sequence spans 801 residues: Na(+)/H(+) antiporter subunit A (801 aa).

21 consecutive transmembrane segments (helical) span residues 4–21, 28–50, 80–102, 109–128, 132–154, 166–188, 203–222, 229–251, 266–288, 301–323, 338–360, 372–394, 428–450, 471–493, 526–548, 594–616, 626–647, 654–671, 676–698, 710–732, and 772–789; these read LHLA…IPFL, VHTG…PMIR, GLLF…IFYL, LGPF…GVVL, VMVL…GYWY, SLLI…YLIT, IAGH…GAFT, FYIW…HSAT, IFAF…MVWG, ILAF…SAAA, AAIF…VGII, LGGL…FSMA, VLFP…KLLF, VGML…FPNI, GVTT…YLSL, YLLY…KGGF, IGVY…TVFA, IIAL…FVIF, LALT…FYHL, FRMT…GIAS, and MFEI…YSMI.

It belongs to the CPA3 antiporters (TC 2.A.63) subunit A family. In terms of assembly, forms a heterooligomeric complex that consists of seven subunits: MrpA, MrpB, MrpC, MrpD, MrpE, MrpF and MrpG.

Its subcellular location is the cell membrane. Mrp complex is a Na(+)/H(+) antiporter that is considered to be the major Na(+) excretion system in B.subtilis. Has a major role in Na(+) resistance and a minor role in Na(+)- and K(+)-dependent pH homeostasis as compared to TetB. MrpA may be the actual Na(+)/H(+) antiporter, although the six other Mrp proteins are all required for Na(+)/H(+) antiport activity and Na(+) resistance. MrpA is required for initiation of sporulation when external Na(+) concentration increases. Also transports Li(+) but not K(+), Ca(2+) or Mg(2+). The polypeptide is Na(+)/H(+) antiporter subunit A (mrpA) (Bacillus subtilis (strain 168)).